The sequence spans 123 residues: MIQQESMLNVADNSGARSVKCIKVLGGSRRRYACVGDIIVISIKEAIPRGKVKKGEVLKAVVVRTSKGVRRPDGSIIRFDTNACVILNKNTEQPIGTRIFGPVTRELRNEKFMKIISLAPEVL.

It belongs to the universal ribosomal protein uL14 family. Part of the 50S ribosomal subunit. Forms a cluster with proteins L3 and L19. In the 70S ribosome, L14 and L19 interact and together make contacts with the 16S rRNA in bridges B5 and B8.

In terms of biological role, binds to 23S rRNA. Forms part of two intersubunit bridges in the 70S ribosome. This is Large ribosomal subunit protein uL14 from Hamiltonella defensa subsp. Acyrthosiphon pisum (strain 5AT).